We begin with the raw amino-acid sequence, 448 residues long: Glucose-6-phosphate isomerase (448 aa).

Residue E290 is the Proton donor of the active site. Catalysis depends on residues H311 and K425.

This sequence belongs to the GPI family.

The protein localises to the cytoplasm. The enzyme catalyses alpha-D-glucose 6-phosphate = beta-D-fructose 6-phosphate. It functions in the pathway carbohydrate biosynthesis; gluconeogenesis. It participates in carbohydrate degradation; glycolysis; D-glyceraldehyde 3-phosphate and glycerone phosphate from D-glucose: step 2/4. Functionally, catalyzes the reversible isomerization of glucose-6-phosphate to fructose-6-phosphate. In Levilactobacillus brevis (strain ATCC 367 / BCRC 12310 / CIP 105137 / JCM 1170 / LMG 11437 / NCIMB 947 / NCTC 947) (Lactobacillus brevis), this protein is Glucose-6-phosphate isomerase.